Here is a 327-residue protein sequence, read N- to C-terminus: 2-keto-3-deoxygluconate permease (327 aa).

Transmembrane regions (helical) follow at residues 10-30 (IPGG…TFSP), 42-62 (GMIT…GASI), 73-93 (KSGT…AIAS), 95-115 (IIPE…LALV), 139-159 (AGAF…IILG), 163-183 (IASF…VGFA), 199-219 (VQTL…LTVI), 224-244 (LLGI…LIIA), 254-274 (TAGI…VLIA), and 289-309 (SLVA…TSIW).

It belongs to the KdgT transporter family.

Its subcellular location is the cell inner membrane. The enzyme catalyses 2-dehydro-3-deoxy-D-gluconate(in) + H(+)(in) = 2-dehydro-3-deoxy-D-gluconate(out) + H(+)(out). Catalyzes the proton-dependent uptake of 2-keto-3-deoxygluconate (KDG) into the cell. This chain is 2-keto-3-deoxygluconate permease, found in Escherichia coli O139:H28 (strain E24377A / ETEC).